The primary structure comprises 226 residues: 7-cyano-7-deazaguanine synthase (226 aa).

7 to 17 (LSGGMDSLVTT) contributes to the ATP binding site. 4 residues coordinate Zn(2+): C187, C195, C198, and C201.

This sequence belongs to the QueC family. Requires Zn(2+) as cofactor.

The catalysed reaction is 7-carboxy-7-deazaguanine + NH4(+) + ATP = 7-cyano-7-deazaguanine + ADP + phosphate + H2O + H(+). The protein operates within purine metabolism; 7-cyano-7-deazaguanine biosynthesis. Functionally, catalyzes the ATP-dependent conversion of 7-carboxy-7-deazaguanine (CDG) to 7-cyano-7-deazaguanine (preQ(0)). This chain is 7-cyano-7-deazaguanine synthase, found in Chlorobium phaeobacteroides (strain DSM 266 / SMG 266 / 2430).